The chain runs to 182 residues: Adenine phosphoribosyltransferase (182 aa).

The protein belongs to the purine/pyrimidine phosphoribosyltransferase family. Homodimer.

The protein resides in the cytoplasm. It carries out the reaction AMP + diphosphate = 5-phospho-alpha-D-ribose 1-diphosphate + adenine. Its pathway is purine metabolism; AMP biosynthesis via salvage pathway; AMP from adenine: step 1/1. Functionally, catalyzes a salvage reaction resulting in the formation of AMP, that is energically less costly than de novo synthesis. This chain is Adenine phosphoribosyltransferase, found in Pseudomonas fluorescens (strain SBW25).